The primary structure comprises 93 residues: Protein VNG_0358C (93 aa).

The protein is Protein VNG_0358C of Halobacterium salinarum (strain ATCC 700922 / JCM 11081 / NRC-1) (Halobacterium halobium).